Here is a 92-residue protein sequence, read N- to C-terminus: Putative membrane protein insertion efficiency factor (92 aa).

It belongs to the UPF0161 family.

Its subcellular location is the cell inner membrane. Functionally, could be involved in insertion of integral membrane proteins into the membrane. This is Putative membrane protein insertion efficiency factor from Synechococcus sp. (strain CC9605).